We begin with the raw amino-acid sequence, 260 residues long: tRNA pseudouridine synthase C (260 aa).

The active site involves aspartate 54.

It belongs to the pseudouridine synthase RluA family.

The enzyme catalyses uridine(65) in tRNA = pseudouridine(65) in tRNA. Responsible for synthesis of pseudouridine from uracil-65 in transfer RNAs. This is tRNA pseudouridine synthase C (truC) from Escherichia coli O6:H1 (strain CFT073 / ATCC 700928 / UPEC).